Here is a 360-residue protein sequence, read N- to C-terminus: Dihydroorotate dehydrogenase (quinone) (360 aa).

Residues 65–69 (AGLDK) and threonine 89 each bind FMN. Residue lysine 69 coordinates substrate. 114–118 (NRLGF) provides a ligand contact to substrate. FMN contacts are provided by asparagine 147 and asparagine 180. Residue asparagine 180 participates in substrate binding. Serine 183 (nucleophile) is an active-site residue. Position 185 (asparagine 185) interacts with substrate. FMN is bound by residues lysine 225 and threonine 253. 254–255 (NT) contacts substrate. FMN contacts are provided by residues glycine 276, glycine 305, and 326-327 (YT).

Belongs to the dihydroorotate dehydrogenase family. Type 2 subfamily. As to quaternary structure, monomer. Requires FMN as cofactor.

It localises to the cell membrane. It carries out the reaction (S)-dihydroorotate + a quinone = orotate + a quinol. It functions in the pathway pyrimidine metabolism; UMP biosynthesis via de novo pathway; orotate from (S)-dihydroorotate (quinone route): step 1/1. Catalyzes the conversion of dihydroorotate to orotate with quinone as electron acceptor. This is Dihydroorotate dehydrogenase (quinone) from Verminephrobacter eiseniae (strain EF01-2).